The sequence spans 543 residues: CTP synthase (543 aa).

Residues 1–266 (MTKFIFVTGG…DDIICERFGI (266 aa)) form an amidoligase domain region. Residue serine 13 coordinates CTP. Residue serine 13 participates in UTP binding. ATP is bound by residues 14 to 19 (SLGKGI) and aspartate 71. Residues aspartate 71 and glutamate 140 each contribute to the Mg(2+) site. CTP is bound by residues 147-149 (DIE), 187-192 (KTKPTQ), and lysine 223. UTP is bound by residues 187–192 (KTKPTQ) and lysine 223. The 253-residue stretch at 291–543 (TVAIVGKYVE…VKAAIDHQNI (253 aa)) folds into the Glutamine amidotransferase type-1 domain. L-glutamine is bound at residue glycine 354. Cysteine 381 functions as the Nucleophile; for glutamine hydrolysis in the catalytic mechanism. Residues 382-385 (LGMQ), glutamate 404, and arginine 471 each bind L-glutamine. Residues histidine 516 and glutamate 518 contribute to the active site.

This sequence belongs to the CTP synthase family. Homotetramer.

It carries out the reaction UTP + L-glutamine + ATP + H2O = CTP + L-glutamate + ADP + phosphate + 2 H(+). It catalyses the reaction L-glutamine + H2O = L-glutamate + NH4(+). The catalysed reaction is UTP + NH4(+) + ATP = CTP + ADP + phosphate + 2 H(+). Its pathway is pyrimidine metabolism; CTP biosynthesis via de novo pathway; CTP from UDP: step 2/2. Its activity is regulated as follows. Allosterically activated by GTP, when glutamine is the substrate; GTP has no effect on the reaction when ammonia is the substrate. The allosteric effector GTP functions by stabilizing the protein conformation that binds the tetrahedral intermediate(s) formed during glutamine hydrolysis. Inhibited by the product CTP, via allosteric rather than competitive inhibition. In terms of biological role, catalyzes the ATP-dependent amination of UTP to CTP with either L-glutamine or ammonia as the source of nitrogen. Regulates intracellular CTP levels through interactions with the four ribonucleotide triphosphates. In Psychrobacter sp. (strain PRwf-1), this protein is CTP synthase.